The sequence spans 81 residues: Acyl carrier protein (81 aa).

Positions 4–79 (QEIFEKVQTI…QAVDFISQKV (76 aa)) constitute a Carrier domain. At serine 39 the chain carries O-(pantetheine 4'-phosphoryl)serine.

This sequence belongs to the acyl carrier protein (ACP) family. Post-translationally, 4'-phosphopantetheine is transferred from CoA to a specific serine of apo-ACP by AcpS. This modification is essential for activity because fatty acids are bound in thioester linkage to the sulfhydryl of the prosthetic group.

It localises to the plastid. It is found in the chloroplast. The protein operates within lipid metabolism; fatty acid biosynthesis. Its function is as follows. Carrier of the growing fatty acid chain in fatty acid biosynthesis. The polypeptide is Acyl carrier protein (Guillardia theta (Cryptophyte)).